A 361-amino-acid polypeptide reads, in one-letter code: YKLICYYTSWSQYREGDGSCFPDAIDPFLCTHVIYSFANISNNEIDTWEWNDVTLYDTLNTLKNRNPKLKTLLSVGGWNFGPERFSAIASKTQSRRTFIKSVPPFLRTHGFDGLDLAWLYPGRRDKRHLTTLVKEMKAEFIREAQAGTEQLLLSAAVSAGKIAIDRGYDIAQISRHLDFISLLTYDFHGAWRQTVGHHSPLFAGNEDASSRFSNADYAVSYMLRLGAPANKLVMGIPTFGRSFTLASSKTDVGAPVSGPGVPGRFTKEKGILAYYEICDFLHGATTHRFRDQQVPYATKGNQWVAYDDQESVKNKARYLKNRQLAGAMVWALDLDDFRGTFCGQNLTFPLTSAVKDVLAEV.

In terms of domain architecture, GH18 spans 1–361; that stretch reads YKLICYYTSW…SAVKDVLAEV (361 aa). Cys5 and Cys30 are joined by a disulfide. Asn39 carries N-linked (GlcNAc...) asparagine glycosylation. Chitin-binding positions include 49 to 50, 76 to 79, Tyr120, 183 to 186, and Arg241; these read EW, GGWN, and LTYD. Cys278 and Cys342 are oxidised to a cystine. Residues 302–316 are important for AKT1 activation and IL8 production; the sequence is QWVAYDDQESVKNKA. Residue Trp330 participates in chitin binding. N-linked (GlcNAc...) asparagine glycosylation is present at Asn345.

Belongs to the glycosyl hydrolase 18 family. In terms of assembly, monomer. As to expression, detected in mammary gland.

The protein resides in the secreted. It localises to the extracellular space. The protein localises to the cytoplasm. Its subcellular location is the perinuclear region. It is found in the endoplasmic reticulum. In terms of biological role, carbohydrate-binding lectin with a preference for chitin. Has no chitinase activity. May play a role in tissue remodeling and in the capacity of cells to respond to and cope with changes in their environment. Plays a role in T-helper cell type 2 (Th2) inflammatory response and IL-13-induced inflammation, regulating allergen sensitization, inflammatory cell apoptosis, dendritic cell accumulation and M2 macrophage differentiation. Facilitates invasion of pathogenic enteric bacteria into colonic mucosa and lymphoid organs. Mediates activation of AKT1 signaling pathway and subsequent IL8 production in colonic epithelial cells. Regulates antibacterial responses in lung by contributing to macrophage bacterial killing, controlling bacterial dissemination and augmenting host tolerance. Also regulates hyperoxia-induced injury, inflammation and epithelial apoptosis in lung. This Ovis aries (Sheep) protein is Chitinase-3-like protein 1 (CHI3L1).